The primary structure comprises 923 residues: Glucosidase 2 subunit alpha (923 aa).

The signal sequence occupies residues 1–25; the sequence is MRYHGICWFIFQAAIIFAIFGSCQG. N262 carries N-linked (GlcNAc...) asparagine glycosylation. Catalysis depends on D524, which acts as the Nucleophile. Residue E527 is part of the active site. Residue N563 is glycosylated (N-linked (GlcNAc...) asparagine). D600 (proton donor) is an active-site residue. N822 is a glycosylation site (N-linked (GlcNAc...) asparagine).

The protein belongs to the glycosyl hydrolase 31 family. As to quaternary structure, heterodimer of a catalytic subunit alpha (gls2) and a subunit beta (gtb1).

It is found in the endoplasmic reticulum. The enzyme catalyses N(4)-(alpha-D-Glc-(1-&gt;3)-alpha-D-Man-(1-&gt;2)-alpha-D-Man-(1-&gt;2)-alpha-D-Man-(1-&gt;3)-[alpha-D-Man-(1-&gt;2)-alpha-D-Man-(1-&gt;3)-[alpha-D-Man-(1-&gt;2)-alpha-D-Man-(1-&gt;6)]-alpha-D-Man-(1-&gt;6)]-beta-D-Man-(1-&gt;4)-beta-D-GlcNAc-(1-&gt;4)-beta-D-GlcNAc)-L-asparaginyl-[protein] + H2O = N(4)-(alpha-D-Man-(1-&gt;2)-alpha-D-Man-(1-&gt;2)-alpha-D-Man-(1-&gt;3)-[alpha-D-Man-(1-&gt;2)-alpha-D-Man-(1-&gt;3)-[alpha-D-Man-(1-&gt;2)-alpha-D-Man-(1-&gt;6)]-alpha-D-Man-(1-&gt;6)]-beta-D-Man-(1-&gt;4)-beta-D-GlcNAc-(1-&gt;4)-beta-D-GlcNAc)-L-asparaginyl-[protein] (N-glucan mannose isomer 9A1,2,3B1,2,3) + beta-D-glucose. It carries out the reaction N(4)-(alpha-D-Glc-(1-&gt;3)-alpha-D-Glc-(1-&gt;3)-alpha-D-Man-(1-&gt;2)-alpha-D-Man-(1-&gt;2)-alpha-D-Man-(1-&gt;3)-[alpha-D-Man-(1-&gt;2)-alpha-D-Man-(1-&gt;3)-[alpha-D-Man-(1-&gt;2)-alpha-D-Man-(1-&gt;6)]-alpha-D-Man-(1-&gt;6)]-beta-D-Man-(1-&gt;4)-beta-D-GlcNAc-(1-&gt;4)-beta-D-GlcNAc)-L-asparaginyl-[protein] + H2O = N(4)-(alpha-D-Glc-(1-&gt;3)-alpha-D-Man-(1-&gt;2)-alpha-D-Man-(1-&gt;2)-alpha-D-Man-(1-&gt;3)-[alpha-D-Man-(1-&gt;2)-alpha-D-Man-(1-&gt;3)-[alpha-D-Man-(1-&gt;2)-alpha-D-Man-(1-&gt;6)]-alpha-D-Man-(1-&gt;6)]-beta-D-Man-(1-&gt;4)-beta-D-GlcNAc-(1-&gt;4)-beta-D-GlcNAc)-L-asparaginyl-[protein] + beta-D-glucose. It participates in glycan metabolism; N-glycan metabolism. Catalytic subunit of glucosidase 2, which cleaves sequentially the 2 innermost alpha-1,3-linked glucose residues from the Glc(2)Man(9)GlcNAc(2) oligosaccharide precursor of immature glycoproteins. This chain is Glucosidase 2 subunit alpha, found in Schizosaccharomyces pombe (strain 972 / ATCC 24843) (Fission yeast).